Reading from the N-terminus, the 73-residue chain is Large ribosomal subunit protein uL29 (73 aa).

Belongs to the universal ribosomal protein uL29 family.

In Synechocystis sp. (strain ATCC 27184 / PCC 6803 / Kazusa), this protein is Large ribosomal subunit protein uL29 (rpmC).